We begin with the raw amino-acid sequence, 290 residues long: Bifunctional protein FolD (290 aa).

Residues 169–171 (GAS), I194, and I235 contribute to the NADP(+) site.

This sequence belongs to the tetrahydrofolate dehydrogenase/cyclohydrolase family. As to quaternary structure, homodimer.

The catalysed reaction is (6R)-5,10-methylene-5,6,7,8-tetrahydrofolate + NADP(+) = (6R)-5,10-methenyltetrahydrofolate + NADPH. The enzyme catalyses (6R)-5,10-methenyltetrahydrofolate + H2O = (6R)-10-formyltetrahydrofolate + H(+). The protein operates within one-carbon metabolism; tetrahydrofolate interconversion. In terms of biological role, catalyzes the oxidation of 5,10-methylenetetrahydrofolate to 5,10-methenyltetrahydrofolate and then the hydrolysis of 5,10-methenyltetrahydrofolate to 10-formyltetrahydrofolate. The polypeptide is Bifunctional protein FolD (Helicobacter pylori (strain HPAG1)).